Consider the following 503-residue polypeptide: Protein ERGIC-53-like (503 aa).

The N-terminal stretch at 1–25 (MLKTGGLSPSLCLLSLLLALHSAER) is a signal peptide. The Lumenal portion of the chain corresponds to 26–439 (SYPPPQRRFE…WLPGFSTCLR (414 aa)). Residues 32 to 253 (RRFEYKLSFK…DVLSFLTFSL (222 aa)) enclose the L-type lectin-like domain. C177 and C216 are disulfide-bonded. The helical transmembrane segment at 440-460 (TSIFLFFLLIQTVGFFCYMNF) threads the bilayer. Topologically, residues 461 to 503 (RQELDKRLQEYLFTESISLQPALPIPRTIGVLRRQPVSPSMQA) are cytoplasmic.

As to expression, predominantly expressed in the sublingual salivary gland, in the mucous cells of the acini, but not in the serous cells, nor in the duct system (at protein level). Not detected in the submandilar, nor the parotid glands. Expressed in the mucous glands, but not detected in the serous glands (at protein level). Besides the salivary glands, expressed in the Brunner's glands in the duodenum, but no other mucous or serous glands (at protein level).

It is found in the endoplasmic reticulum-Golgi intermediate compartment membrane. This chain is Protein ERGIC-53-like (Lman1l), found in Rattus norvegicus (Rat).